The following is a 331-amino-acid chain: Major ferric iron-binding protein (331 aa).

Residues 1-22 form the signal peptide; that stretch reads MKTSIRYALLAAALTAATPALA. Fe cation-binding residues include H31, E79, Y217, and Y218.

This sequence belongs to the bacterial solute-binding protein 1 family.

The protein localises to the periplasm. Functionally, this protein may be a central component in the iron-acquisition system. The chain is Major ferric iron-binding protein (fbpA) from Neisseria meningitidis serogroup B (strain ATCC BAA-335 / MC58).